The following is a 529-amino-acid chain: Low affinity inorganic phosphate transporter 4 (529 aa).

Residues 1–21 lie on the Cytoplasmic side of the membrane; that stretch reads MASDNLVVLNALDTARTQWYH. Residues 22 to 42 traverse the membrane as a helical segment; it reads VTAVIIAGMGFFTDAYDLFCI. Over 43-71 the chain is Extracellular; the sequence is STVSKLLGRLYYYDPSTKAPGKLPHMANN. A helical transmembrane segment spans residues 72-92; it reads WVIGVALVGTLSGQLVFGWLG. The Cytoplasmic portion of the chain corresponds to 93–99; it reads DKLGRKK. Residues 100–120 form a helical membrane-spanning segment; that stretch reads VYGLTLILMVICALCSGLSLG. At 121-125 the chain is on the extracellular side; that stretch reads YSPKS. Residues 126 to 146 form a helical membrane-spanning segment; the sequence is VIGTLCFFRFWLGFGIGGDYP. Topologically, residues 147-161 are cytoplasmic; that stretch reads LSATIMSEYANKSTR. A helical membrane pass occupies residues 162–182; that stretch reads GAFIAAVFAMQGVGIIFAGLV. Residues 183-211 lie on the Extracellular side of the membrane; that stretch reads SMTISKVFLMNFEGKPFNVDEVLSTEPEA. Residues 212 to 232 traverse the membrane as a helical segment; sequence DYVWRIVLMLGALPALLTYYW. Residues 233-291 lie on the Cytoplasmic side of the membrane; it reads RMKMPETGRYTAIIEGNAKQAAIDMGKVLDIEIQAEGDKLAQFKAANEYSLLSNEFFQR. Residues 292-312 traverse the membrane as a helical segment; sequence HGLHLIGTMSTWFLLDIAFYS. At 313–344 the chain is on the extracellular side; the sequence is QNLTQKDIFPVMGLTSKANTISALREMFETSR. Asparagine 314 is a glycosylation site (N-linked (GlcNAc...) asparagine). A helical transmembrane segment spans residues 345–365; the sequence is AMFVIALFGTFPGYWFTVFFI. Residues 366–374 lie on the Cytoplasmic side of the membrane; sequence EKIGRFKIQ. The helical transmembrane segment at 375-395 threads the bilayer; that stretch reads LVGFFMMSVFMAIIGVKYDYL. At 396-405 the chain is on the extracellular side; sequence RNKEHKWTFA. A helical membrane pass occupies residues 406-426; sequence ALYGLTFFFANFGPNSTTFVL. Over 427-437 the chain is Cytoplasmic; that stretch reads PAELFPTRVRS. The helical transmembrane segment at 438–458 threads the bilayer; sequence TCHALSAALGKAGAMISAFGI. Topologically, residues 459 to 471 are extracellular; it reads QQYTQDQDVRKIK. The chain crosses the membrane as a helical span at residues 472–492; that stretch reads TAMLLLAFTNMVGFCCTFLVT. Over 493–529 the chain is Cytoplasmic; the sequence is ETKGRSLEEISGEDGRQNETQMKTTRPVSGHPDDGWE. The disordered stretch occupies residues 501–529; that stretch reads EISGEDGRQNETQMKTTRPVSGHPDDGWE. The span at 510 to 519 shows a compositional bias: polar residues; sequence NETQMKTTRP.

Belongs to the major facilitator superfamily. Phosphate:H(+) symporter (TC 2.A.1.9) family.

The protein resides in the cell membrane. It catalyses the reaction phosphate(in) + H(+)(in) = phosphate(out) + H(+)(out). Low-affinity transporter for external inorganic phosphate (Pi) probably involved in the acquisition of phosphate released by arbuscular mycorrhizal (AM) fungi (e.g. Rhizophagus irregularis and Glomus intraradices) during AM symbiosis. Acts as a Pi-sensing machinery at the root tip level, independently of AM fungi, involved in the regulation of early root branching and lateral roots formation. This chain is Low affinity inorganic phosphate transporter 4, found in Petunia hybrida (Petunia).